The chain runs to 637 residues: MDFIKSAASFIAKAGSQFPYDLNEKIPLSSNSVWTLQTGSIRESAQPCSVFSISLSTHPEWAELADRACETMKTLRHPCIIKYLSTYKSSTHLYIATETVRPVTTELNELSAEIKTYGLWRVSAALSFLNDKNIVHGNLQMSSVYLNSADEWIIGDFFLAGDSPQFIKDNHDKILNWSRLVPFEIQSSTLNSASFIYLDSYELGKFISHLYNGTPGDLSQRGNIPANIFVSAKKLLNVEGKQKLLASEFLKLGERPGGFFRTHLITLYELLSEVRINEEEDRVKLKQLLSSKLEVIPKNYIQKVVLNILFLLLSIDTHSDVVELLFKCAQIVKGRPDIEKDFGVPLLSLLKQQSVPIRGLLLSGIINNPDVLPKNIYEDTSFSVFANLVRSNSPTLKEHAIVVFSIIAPKLSKKTLNNELLRSLAVVQNDQHPTLRTNSTICLGKIAEYLDASVRKPVLAAALSRSLKDPFVPAREAALKVLLSVQNYFDTKDVAIKLFPSVVPLLIDENEGIRRTAEDVTDQFLSRIKNFNLGEKENVSAPAKFNGSFWSKFIHSSSASPSPSIDMKKESLELKNDTTEIKEKKNSKSRVVGNTENSKDEFNNPLFETEEQIDESWMENWNDEEETENNVEESWGL.

Positions M1 to I296 constitute a Protein kinase domain. The stretch at K414–L450 is one HEAT repeat. A compositionally biased stretch (basic and acidic residues) spans N576–N586. Residues N576–L637 form a disordered region. The segment covering E608 to V631 has biased composition (acidic residues).

The protein resides in the golgi apparatus. The protein is Protein kinase domain-containing protein ppk3 (ppk3) of Schizosaccharomyces pombe (strain 972 / ATCC 24843) (Fission yeast).